The chain runs to 352 residues: Photosystem II D2 protein (352 aa).

A helical membrane pass occupies residues 40 to 60 (TAYLALGGWLTGTTFVTSWYT). H117 contacts chlorophyll a. The helical transmembrane segment at 124–140 (GFMLRQFEIARLVGIRP) threads the bilayer. Positions 129 and 142 each coordinate pheophytin a. The chain crosses the membrane as a helical span at residues 152 to 165 (VFVSVFLIYPLGQS). H197 contacts chlorophyll a. Residues 207–227 (GALLCAIHGATVENTLFEDGE) traverse the membrane as a helical segment. Residues H214 and F261 each contribute to the a plastoquinone site. Fe cation is bound at residue H214. H268 serves as a coordination point for Fe cation. Residues 278 to 294 (GLWTSSIGIIGLALNLR) traverse the membrane as a helical segment.

This sequence belongs to the reaction center PufL/M/PsbA/D family. As to quaternary structure, PSII is composed of 1 copy each of membrane proteins PsbA, PsbB, PsbC, PsbD, PsbE, PsbF, PsbH, PsbI, PsbJ, PsbK, PsbL, PsbM, PsbT, PsbX, PsbY, PsbZ, Psb30/Ycf12, at least 3 peripheral proteins of the oxygen-evolving complex and a large number of cofactors. It forms dimeric complexes. The D1/D2 heterodimer binds P680, chlorophylls that are the primary electron donor of PSII, and subsequent electron acceptors. It shares a non-heme iron and each subunit binds pheophytin, quinone, additional chlorophylls, carotenoids and lipids. There is also a Cl(-1) ion associated with D1 and D2, which is required for oxygen evolution. The PSII complex binds additional chlorophylls, carotenoids and specific lipids. serves as cofactor.

The protein localises to the plastid. Its subcellular location is the organellar chromatophore thylakoid membrane. The catalysed reaction is 2 a plastoquinone + 4 hnu + 2 H2O = 2 a plastoquinol + O2. Its function is as follows. Photosystem II (PSII) is a light-driven water:plastoquinone oxidoreductase that uses light energy to abstract electrons from H(2)O, generating O(2) and a proton gradient subsequently used for ATP formation. It consists of a core antenna complex that captures photons, and an electron transfer chain that converts photonic excitation into a charge separation. The D1/D2 (PsbA/PsbD) reaction center heterodimer binds P680, the primary electron donor of PSII as well as several subsequent electron acceptors. D2 is needed for assembly of a stable PSII complex. The sequence is that of Photosystem II D2 protein from Paulinella chromatophora.